The chain runs to 224 residues: N-(5'-phosphoribosyl)anthranilate isomerase (224 aa).

It belongs to the TrpF family.

The catalysed reaction is N-(5-phospho-beta-D-ribosyl)anthranilate = 1-(2-carboxyphenylamino)-1-deoxy-D-ribulose 5-phosphate. The protein operates within amino-acid biosynthesis; L-tryptophan biosynthesis; L-tryptophan from chorismate: step 3/5. The polypeptide is N-(5'-phosphoribosyl)anthranilate isomerase (Sinorhizobium fredii (strain NBRC 101917 / NGR234)).